The following is a 571-amino-acid chain: Proline--tRNA ligase (571 aa).

Belongs to the class-II aminoacyl-tRNA synthetase family. ProS type 1 subfamily. In terms of assembly, homodimer.

Its subcellular location is the cytoplasm. The catalysed reaction is tRNA(Pro) + L-proline + ATP = L-prolyl-tRNA(Pro) + AMP + diphosphate. Its function is as follows. Catalyzes the attachment of proline to tRNA(Pro) in a two-step reaction: proline is first activated by ATP to form Pro-AMP and then transferred to the acceptor end of tRNA(Pro). As ProRS can inadvertently accommodate and process non-cognate amino acids such as alanine and cysteine, to avoid such errors it has two additional distinct editing activities against alanine. One activity is designated as 'pretransfer' editing and involves the tRNA(Pro)-independent hydrolysis of activated Ala-AMP. The other activity is designated 'posttransfer' editing and involves deacylation of mischarged Ala-tRNA(Pro). The misacylated Cys-tRNA(Pro) is not edited by ProRS. The sequence is that of Proline--tRNA ligase from Pseudomonas syringae pv. syringae (strain B728a).